Reading from the N-terminus, the 352-residue chain is 3-isopropylmalate dehydrogenase (352 aa).

Residues arginine 91, arginine 101, arginine 129, and aspartate 218 each contribute to the substrate site. Aspartate 218, aspartate 242, and aspartate 246 together coordinate Mg(2+). Residue glycine 281–asparagine 293 participates in NAD(+) binding.

The protein belongs to the isocitrate and isopropylmalate dehydrogenases family. LeuB type 1 subfamily. In terms of assembly, homodimer. Mg(2+) serves as cofactor. The cofactor is Mn(2+).

Its subcellular location is the cytoplasm. The catalysed reaction is (2R,3S)-3-isopropylmalate + NAD(+) = 4-methyl-2-oxopentanoate + CO2 + NADH. Its pathway is amino-acid biosynthesis; L-leucine biosynthesis; L-leucine from 3-methyl-2-oxobutanoate: step 3/4. Catalyzes the oxidation of 3-carboxy-2-hydroxy-4-methylpentanoate (3-isopropylmalate) to 3-carboxy-4-methyl-2-oxopentanoate. The product decarboxylates to 4-methyl-2 oxopentanoate. The polypeptide is 3-isopropylmalate dehydrogenase (Novosphingobium aromaticivorans (strain ATCC 700278 / DSM 12444 / CCUG 56034 / CIP 105152 / NBRC 16084 / F199)).